The primary structure comprises 362 residues: 3-dehydroquinate synthase (362 aa).

Residues 70 to 75, 104 to 108, 128 to 129, K141, K150, and 168 to 171 each bind NAD(+); these read DGEKYK, GVIGD, TT, and TLNT. E183, H246, and H263 together coordinate Zn(2+).

The protein belongs to the sugar phosphate cyclases superfamily. Dehydroquinate synthase family. Requires Co(2+) as cofactor. Zn(2+) serves as cofactor. NAD(+) is required as a cofactor.

It localises to the cytoplasm. It catalyses the reaction 7-phospho-2-dehydro-3-deoxy-D-arabino-heptonate = 3-dehydroquinate + phosphate. Its pathway is metabolic intermediate biosynthesis; chorismate biosynthesis; chorismate from D-erythrose 4-phosphate and phosphoenolpyruvate: step 2/7. Functionally, catalyzes the conversion of 3-deoxy-D-arabino-heptulosonate 7-phosphate (DAHP) to dehydroquinate (DHQ). In Haemophilus influenzae (strain 86-028NP), this protein is 3-dehydroquinate synthase.